We begin with the raw amino-acid sequence, 474 residues long: HTH-type transcriptional regulator RamB (474 aa).

Residues 10–64 (VRQLRNERGFSQAALAQMLEISPSYLNQIEHDVRPLTVAVLLRITEVFGVDATFF) form the HTH cro/C1-type domain. A DNA-binding region (H-T-H motif) is located at residues 21-40 (QAALAQMLEISPSYLNQIEH).

It belongs to the short-chain fatty acyl-CoA assimilation regulator (ScfR) family.

Involved in the control of the glyoxylate cycle. RamB negatively controls the expression of icl expression during growth on acetate as the sole carbon source. In Mycobacterium tuberculosis (strain CDC 1551 / Oshkosh), this protein is HTH-type transcriptional regulator RamB.